Consider the following 250-residue polypeptide: 5-oxoprolinase subunit A (250 aa).

This sequence belongs to the LamB/PxpA family. In terms of assembly, forms a complex composed of PxpA, PxpB and PxpC.

It catalyses the reaction 5-oxo-L-proline + ATP + 2 H2O = L-glutamate + ADP + phosphate + H(+). In terms of biological role, catalyzes the cleavage of 5-oxoproline to form L-glutamate coupled to the hydrolysis of ATP to ADP and inorganic phosphate. The polypeptide is 5-oxoprolinase subunit A (Thermus thermophilus (strain ATCC BAA-163 / DSM 7039 / HB27)).